Consider the following 954-residue polypeptide: Glycine dehydrogenase (decarboxylating) (954 aa).

The residue at position 704 (Lys-704) is an N6-(pyridoxal phosphate)lysine.

This sequence belongs to the GcvP family. As to quaternary structure, the glycine cleavage system is composed of four proteins: P, T, L and H. Pyridoxal 5'-phosphate serves as cofactor.

It catalyses the reaction N(6)-[(R)-lipoyl]-L-lysyl-[glycine-cleavage complex H protein] + glycine + H(+) = N(6)-[(R)-S(8)-aminomethyldihydrolipoyl]-L-lysyl-[glycine-cleavage complex H protein] + CO2. Functionally, the glycine cleavage system catalyzes the degradation of glycine. The P protein binds the alpha-amino group of glycine through its pyridoxal phosphate cofactor; CO(2) is released and the remaining methylamine moiety is then transferred to the lipoamide cofactor of the H protein. The sequence is that of Glycine dehydrogenase (decarboxylating) from Rhizobium leguminosarum bv. trifolii (strain WSM2304).